Here is a 185-residue protein sequence, read N- to C-terminus: Large ribosomal subunit protein uL5 (185 aa).

It belongs to the universal ribosomal protein uL5 family. Part of the 50S ribosomal subunit; part of the 5S rRNA/L5/L18/L25 subcomplex. Contacts the 5S rRNA and the P site tRNA. Forms a bridge to the 30S subunit in the 70S ribosome.

Functionally, this is one of the proteins that bind and probably mediate the attachment of the 5S RNA into the large ribosomal subunit, where it forms part of the central protuberance. In the 70S ribosome it contacts protein S13 of the 30S subunit (bridge B1b), connecting the 2 subunits; this bridge is implicated in subunit movement. Contacts the P site tRNA; the 5S rRNA and some of its associated proteins might help stabilize positioning of ribosome-bound tRNAs. The chain is Large ribosomal subunit protein uL5 from Brucella abortus (strain 2308).